The chain runs to 200 residues: NADH-quinone oxidoreductase subunit C (200 aa).

This sequence belongs to the complex I 30 kDa subunit family. NDH-1 is composed of 14 different subunits. Subunits NuoB, C, D, E, F, and G constitute the peripheral sector of the complex.

It localises to the cell inner membrane. The catalysed reaction is a quinone + NADH + 5 H(+)(in) = a quinol + NAD(+) + 4 H(+)(out). NDH-1 shuttles electrons from NADH, via FMN and iron-sulfur (Fe-S) centers, to quinones in the respiratory chain. The immediate electron acceptor for the enzyme in this species is believed to be ubiquinone. Couples the redox reaction to proton translocation (for every two electrons transferred, four hydrogen ions are translocated across the cytoplasmic membrane), and thus conserves the redox energy in a proton gradient. In Ralstonia pickettii (strain 12J), this protein is NADH-quinone oxidoreductase subunit C.